The primary structure comprises 222 residues: 7-cyano-7-deazaguanine synthase (222 aa).

11–21 (LSGGMDSAVLL) contacts ATP. Zn(2+)-binding residues include Cys-192, Cys-200, Cys-203, and Cys-206.

Belongs to the QueC family. Zn(2+) is required as a cofactor.

The catalysed reaction is 7-carboxy-7-deazaguanine + NH4(+) + ATP = 7-cyano-7-deazaguanine + ADP + phosphate + H2O + H(+). Its pathway is purine metabolism; 7-cyano-7-deazaguanine biosynthesis. Functionally, catalyzes the ATP-dependent conversion of 7-carboxy-7-deazaguanine (CDG) to 7-cyano-7-deazaguanine (preQ(0)). This Sulfurihydrogenibium sp. (strain YO3AOP1) protein is 7-cyano-7-deazaguanine synthase.